Reading from the N-terminus, the 38-residue chain is NAD-reducing hydrogenase HoxS subunit beta (38 aa).

This sequence belongs to the [NiFe]/[NiFeSe] hydrogenase large subunit family. As to quaternary structure, tetramer of an alpha and a gamma subunits (flavin-containing dimer), and a delta and a nickel-containing beta subunits (hydrogenase dimer). It depends on FMN as a cofactor. The cofactor is Ni(2+).

It localises to the cytoplasm. It carries out the reaction H2 + NAD(+) = NADH + H(+). The chain is NAD-reducing hydrogenase HoxS subunit beta (hoxH) from Rhodococcus opacus (Nocardia opaca).